Here is a 102-residue protein sequence, read N- to C-terminus: Aspartyl/glutamyl-tRNA(Asn/Gln) amidotransferase subunit C (102 aa).

It belongs to the GatC family. Heterotrimer of A, B and C subunits.

The catalysed reaction is L-glutamyl-tRNA(Gln) + L-glutamine + ATP + H2O = L-glutaminyl-tRNA(Gln) + L-glutamate + ADP + phosphate + H(+). It carries out the reaction L-aspartyl-tRNA(Asn) + L-glutamine + ATP + H2O = L-asparaginyl-tRNA(Asn) + L-glutamate + ADP + phosphate + 2 H(+). In terms of biological role, allows the formation of correctly charged Asn-tRNA(Asn) or Gln-tRNA(Gln) through the transamidation of misacylated Asp-tRNA(Asn) or Glu-tRNA(Gln) in organisms which lack either or both of asparaginyl-tRNA or glutaminyl-tRNA synthetases. The reaction takes place in the presence of glutamine and ATP through an activated phospho-Asp-tRNA(Asn) or phospho-Glu-tRNA(Gln). The sequence is that of Aspartyl/glutamyl-tRNA(Asn/Gln) amidotransferase subunit C from Bordetella avium (strain 197N).